The sequence spans 181 residues: Large ribosomal subunit protein uL10 (181 aa).

Belongs to the universal ribosomal protein uL10 family. In terms of assembly, part of the ribosomal stalk of the 50S ribosomal subunit. The N-terminus interacts with L11 and the large rRNA to form the base of the stalk. The C-terminus forms an elongated spine to which L12 dimers bind in a sequential fashion forming a multimeric L10(L12)X complex.

Its function is as follows. Forms part of the ribosomal stalk, playing a central role in the interaction of the ribosome with GTP-bound translation factors. This chain is Large ribosomal subunit protein uL10, found in Protochlamydia amoebophila (strain UWE25).